A 155-amino-acid chain; its full sequence is Small ribosomal subunit protein uS9 (155 aa).

The protein belongs to the universal ribosomal protein uS9 family.

This chain is Small ribosomal subunit protein uS9, found in Sinorhizobium fredii (strain NBRC 101917 / NGR234).